We begin with the raw amino-acid sequence, 1755 residues long: Transposon Ty1-ML1 Gag-Pol polyprotein (1755 aa).

3 stretches are compositionally biased toward polar residues: residues 1–23, 48–60, and 127–152; these read MESQ…SVTS, TKAN…TPAS, and QSQF…GNTF. 3 disordered regions span residues 1–88, 126–173, and 352–421; these read MESQ…YPQQ, PQSQ…RPPP, and GSRN…SKST. Residues 153-165 show a composition bias toward low complexity; that stretch reads TDSSSADSDMTST. The tract at residues 299 to 401 is RNA-binding; sequence NNGIHINNKV…NSKSKTARAH (103 aa). The span at 402–418 shows a compositional bias: low complexity; sequence NVSTSNNSPSTDNDSIS. Aspartate 461 (for protease activity; shared with dimeric partner) is an active-site residue. The segment at 583–640 is integrase-type zinc finger-like; the sequence is NVHTSESTRKYPYPFIHRMLAHANAQTIRYSLKNNTITYFNESDVDWSSAIDYQCPDC. The 176-residue stretch at 660–835 folds into the Integrase catalytic domain; sequence NSYEPFQYLH…AGLDISTLLP (176 aa). Mg(2+) is bound by residues aspartate 671 and aspartate 736. Disordered stretches follow at residues 956 to 1087, 1092 to 1111, and 1130 to 1171; these read SKAV…ETEK, RSPS…NIVP, and DLPL…DSNA. Positions 960–969 are enriched in low complexity; the sequence is SPTDSTPPST. Positions 1005–1015 are enriched in polar residues; the sequence is STPQISNIEST. The span at 1038 to 1053 shows a compositional bias: basic and acidic residues; the sequence is ESSHASKSKDFRHSDS. Polar residues-rich tracts occupy residues 1054-1082 and 1101-1111; these read YSEN…QISD and PENNSSHNIVP. The Bipartite nuclear localization signal signature appears at 1178-1212; it reads KKRSLEDNETEIKVSRDTWNTKNMRSLEPPRSKKR. The Reverse transcriptase Ty1/copia-type domain maps to 1338–1476; it reads NNYYITQLDI…DILGLEIKYQ (139 aa). 6 residues coordinate Mg(2+): aspartate 1346, aspartate 1427, aspartate 1428, aspartate 1610, glutamate 1652, and aspartate 1685. One can recognise an RNase H Ty1/copia-type domain in the interval 1610–1752; that stretch reads DASYGNQPYY…IKTFKLLTNK (143 aa).

In terms of assembly, the capsid protein forms a homotrimer, from which the VLPs are assembled. The protease is a homodimer, whose active site consists of two apposed aspartic acid residues. Initially, virus-like particles (VLPs) are composed of the structural unprocessed proteins Gag and Gag-Pol, and also contain the host initiator methionine tRNA (tRNA(i)-Met) which serves as a primer for minus-strand DNA synthesis, and a dimer of genomic Ty RNA. Processing of the polyproteins occurs within the particle and proceeds by an ordered pathway, called maturation. First, the protease (PR) is released by autocatalytic cleavage of the Gag-Pol polyprotein yielding capsid protein p45 and a Pol-p154 precursor protein. This cleavage is a prerequisite for subsequent processing of Pol-p154 at the remaining sites to release the mature structural and catalytic proteins. Maturation takes place prior to the RT reaction and is required to produce transposition-competent VLPs.

Its subcellular location is the cytoplasm. It is found in the nucleus. It catalyses the reaction DNA(n) + a 2'-deoxyribonucleoside 5'-triphosphate = DNA(n+1) + diphosphate. The enzyme catalyses Endonucleolytic cleavage to 5'-phosphomonoester.. Capsid protein (CA) is the structural component of the virus-like particle (VLP), forming the shell that encapsulates the retrotransposons dimeric RNA genome. The particles are assembled from trimer-clustered units and there are holes in the capsid shells that allow for the diffusion of macromolecules. CA also has nucleocapsid-like chaperone activity, promoting primer tRNA(i)-Met annealing to the multipartite primer-binding site (PBS), dimerization of Ty1 RNA and initiation of reverse transcription. In terms of biological role, the aspartyl protease (PR) mediates the proteolytic cleavages of the Gag and Gag-Pol polyproteins after assembly of the VLP. Functionally, reverse transcriptase/ribonuclease H (RT) is a multifunctional enzyme that catalyzes the conversion of the retro-elements RNA genome into dsDNA within the VLP. The enzyme displays a DNA polymerase activity that can copy either DNA or RNA templates, and a ribonuclease H (RNase H) activity that cleaves the RNA strand of RNA-DNA heteroduplexes during plus-strand synthesis and hydrolyzes RNA primers. The conversion leads to a linear dsDNA copy of the retrotransposon that includes long terminal repeats (LTRs) at both ends. Its function is as follows. Integrase (IN) targets the VLP to the nucleus, where a subparticle preintegration complex (PIC) containing at least integrase and the newly synthesized dsDNA copy of the retrotransposon must transit the nuclear membrane. Once in the nucleus, integrase performs the integration of the dsDNA into the host genome. In Saccharomyces cerevisiae (strain ATCC 204508 / S288c) (Baker's yeast), this protein is Transposon Ty1-ML1 Gag-Pol polyprotein (TY1B-ML1).